We begin with the raw amino-acid sequence, 300 residues long: Ubiquitin thioesterase otu2 (300 aa).

Disordered regions lie at residues 23-73 (RKQL…QQED) and 89-141 (TAEK…SEKM). Positions 48-61 (LSQKHATERQKLDK) are enriched in basic and acidic residues. Over residues 62–71 (GDEETNETQQ) the composition is skewed to acidic residues. Residues 89 to 109 (TAEKSSVQSSLNTKENTPQQP) are compositionally biased toward polar residues. The segment covering 115–141 (RQKERLERRKAEMKKMSEQAELESEKM) has biased composition (basic and acidic residues). The OTU domain maps to 161-298 (LVAVDIPADG…GAHYNSLLYR (138 aa)).

It is found in the cytoplasm. The enzyme catalyses Thiol-dependent hydrolysis of ester, thioester, amide, peptide and isopeptide bonds formed by the C-terminal Gly of ubiquitin (a 76-residue protein attached to proteins as an intracellular targeting signal).. In terms of biological role, hydrolase that can remove conjugated ubiquitin from proteins and may therefore play an important regulatory role at the level of protein turnover by preventing degradation. This is Ubiquitin thioesterase otu2 (otu2) from Schizosaccharomyces pombe (strain 972 / ATCC 24843) (Fission yeast).